A 310-amino-acid chain; its full sequence is M1-specific T cell receptor beta chain (310 aa).

The N-terminal stretch at 1–21 (MSNQVLCCVVLCLLGANTVDG) is a signal peptide. The interval 22 to 114 (GITQSPKYLF…TAFYLCASSI (93 aa)) is t cell receptor beta variable 19. One can recognise an Ig-like V-type domain in the interval 34–131 (EGQNVTLSCE…FGPGTRLTVT (98 aa)). Residue N37 is glycosylated (N-linked (GlcNAc...) asparagine). C42 and C110 are joined by a disulfide. A CDR1 region spans residues 46-50 (LNHDA). D49 provides a ligand contact to a peptide antigen. Positions 68 to 73 (SQIVND) are CDR2. The segment at 110 to 122 (CASSIRSSYEQYF) is CDR3. Residues 117-131 (SYEQYFGPGTRLTVT) are t cell receptor beta joining 2-7. A t cell receptor beta constant 2 region spans residues 133-310 (DLKNVFPPKV…AMVKRKDSRG (178 aa)). Residues 140-249 (PKVAVFEPSE…WTQDRAKPVT (110 aa)) form the Ig-like C1-type domain. A disulfide bridge links C162 with C227. N201 carries an N-linked (GlcNAc...) asparagine glycan. The segment at 262-276 (CGFTSESYQQGVLSA) is connecting peptide. The helical transmembrane segment at 277 to 299 (TILYEILLGKATLYAVLVSALVL) threads the bilayer. Topologically, residues 300-310 (MAMVKRKDSRG) are cytoplasmic.

Disulfide-linked heterodimer with TRAV27*01J42*01C*01 alpha chain. The TR primarily interacts via its CDR3-beta domain with M/matrix protein 1-derived peptide (GILGFVFTL) displayed by HLA-A*02.01 in a 'peg-notch' recognition mode. The alpha-beta TR associates with the transmembrane signaling CD3 coreceptor proteins to form the TR-CD3 (TCR). The assembly of alpha-beta TR heterodimers with CD3 occurs in the endoplasmic reticulum where a single alpha-beta TR heterodimer associates with one CD3D-CD3E heterodimer, one CD3G-CD3E heterodimer and one CD247 homodimer forming a stable octameric structure. CD3D-CD3E and CD3G-CD3E heterodimers preferentially associate with TR alpha and TR beta chains (via TM domain), respectively. The association of the CD247 homodimer is the last step of TCR assembly in the endoplasmic reticulum and is required for transport to the cell surface. In terms of tissue distribution, expressed in M/matrix protein 1-specific effector memory CD8-positive T cells readily detectable in the peripheral blood, secondary lymphoid organs and lung (primary site of infection) of IAV infected individuals.

The protein localises to the cell membrane. In terms of biological role, the beta chain of TRAV27*01J42*01C*01/TRBV19*01J2S7*01C*02 alpha-beta T cell receptor (TR) clonotype that is specific for HLA-A*02:01-restricted M/matrix protein 1 immunodominant epitope GILGFVFTL of influenza A virus (IAV). Classified as a public TCR clonotype, it is preferentially selected in effector memory CD8-positive T cells among multiple HLA-A*02:01 carriers/individuals and confers long-lived immunity against IAV infection. Can cross-recognize sporadically emerging IAV variants by molecular mimicry, inducing immunity toward different influenza strains. Antigen recognition initiates TR-CD3 clustering on the cell surface and intracellular activation of LCK that phosphorylates the ITAM motifs of CD3G, CD3D, CD3E and CD247 enabling the recruitment of ZAP70. In turn, ZAP70 phosphorylates LAT, which recruits numerous signaling molecules to form the LAT signalosome. The LAT signalosome propagates signal branching to three major signaling pathways, the calcium, the mitogen-activated protein kinase (MAPK) kinase and the nuclear factor NF-kappa-B (NF-kB) pathways, leading to the mobilization of transcription factors that are critical for gene expression and essential for T cell differentiation into effector/memory T cells. In Homo sapiens (Human), this protein is M1-specific T cell receptor beta chain.